Reading from the N-terminus, the 270-residue chain is DNA-directed RNA polymerase subunit Rpo3 (270 aa).

3 residues coordinate [3Fe-4S] cluster: C206, C209, and C212.

Belongs to the archaeal Rpo3/eukaryotic RPB3 RNA polymerase subunit family. In terms of assembly, part of the RNA polymerase complex. [3Fe-4S] cluster is required as a cofactor.

It is found in the cytoplasm. The enzyme catalyses RNA(n) + a ribonucleoside 5'-triphosphate = RNA(n+1) + diphosphate. Functionally, DNA-dependent RNA polymerase (RNAP) catalyzes the transcription of DNA into RNA using the four ribonucleoside triphosphates as substrates. This chain is DNA-directed RNA polymerase subunit Rpo3, found in Methanosphaera stadtmanae (strain ATCC 43021 / DSM 3091 / JCM 11832 / MCB-3).